The chain runs to 429 residues: GTPase Obg (429 aa).

Residues 1–158 (MFVDQVKIYV…RNVQLELKVL (158 aa)) form the Obg domain. Residues 124-145 (RGNKRFATPANPAPELSENGEP) form a disordered region. The OBG-type G domain occupies 159–329 (ADVGLVGFPS…LLLAIADKLE (171 aa)). Residues 165-172 (GFPSVGKS), 190-194 (FTTIV), 212-215 (DLPG), 282-285 (NKMD), and 310-312 (SAV) contribute to the GTP site. 2 residues coordinate Mg(2+): S172 and T192. One can recognise an OCT domain in the interval 351 to 429 (KYIAEEPDFE…LLDYEFEFMD (79 aa)).

It belongs to the TRAFAC class OBG-HflX-like GTPase superfamily. OBG GTPase family. As to quaternary structure, monomer. Mg(2+) serves as cofactor.

It localises to the cytoplasm. Its function is as follows. An essential GTPase which binds GTP, GDP and possibly (p)ppGpp with moderate affinity, with high nucleotide exchange rates and a fairly low GTP hydrolysis rate. Plays a role in control of the cell cycle, stress response, ribosome biogenesis and in those bacteria that undergo differentiation, in morphogenesis control. The protein is GTPase Obg of Listeria welshimeri serovar 6b (strain ATCC 35897 / DSM 20650 / CCUG 15529 / CIP 8149 / NCTC 11857 / SLCC 5334 / V8).